Here is a 357-residue protein sequence, read N- to C-terminus: Protein Wnt-9b (357 aa).

A signal peptide spans 1–22; it reads MRPPPALALAGLCLLALPAAAA. 11 disulfides stabilise this stretch: Cys89–Cys100, Cys135–Cys143, Cys145–Cys162, Cys210–Cys224, Cys212–Cys219, Cys291–Cys316, Cys305–Cys311, Cys315–Cys355, Cys331–Cys346, Cys333–Cys343, and Cys338–Cys339. A glycan (N-linked (GlcNAc...) asparagine) is linked at Asn99. Ser216 carries the O-palmitoleoyl serine; by PORCN lipid modification.

Belongs to the Wnt family. In terms of assembly, forms a soluble 1:1 complex with AFM; this prevents oligomerization and is required for prolonged biological activity. The complex with AFM may represent the physiological form in body fluids. Component of the Wnt-Fzd-LRP5-LRP6 signaling complex that contains a WNT protein, a FZD protein and LRP5 or LRP6. Interacts directly in the complex with LRP6. Interacts with PKD1 (via extracellular domain). Palmitoleoylation is required for efficient binding to frizzled receptors. Depalmitoleoylation leads to Wnt signaling pathway inhibition. In terms of tissue distribution, moderately expressed in fetal kidney and adult kidney. Also found in brain.

It localises to the secreted. The protein resides in the extracellular space. Its subcellular location is the extracellular matrix. Functionally, ligand for members of the frizzled family of seven transmembrane receptors. Functions in the canonical Wnt/beta-catenin signaling pathway. Required for normal embryonic kidney development, and for normal development of the urogenital tract, including uterus and part of the oviduct and the upper vagina in females, and epididymis and vas deferens in males. Activates a signaling cascade in the metanephric mesenchyme that induces tubulogenesis. Acts upstream of WNT4 in the signaling pathways that mediate development of kidney tubules and the Muellerian ducts. Plays a role in cranofacial development and is required for normal fusion of the palate during embryonic development. The protein is Protein Wnt-9b (WNT9B) of Homo sapiens (Human).